The chain runs to 275 residues: Dermonecrotic toxin LarSicTox-alphaIII1 (275 aa).

H5 is an active-site residue. Residues E25 and D27 each coordinate Mg(2+). H41 functions as the Nucleophile in the catalytic mechanism. Cystine bridges form between C45–C51 and C47–C190. D85 provides a ligand contact to Mg(2+). N252 is a glycosylation site (N-linked (GlcNAc...) asparagine).

It belongs to the arthropod phospholipase D family. Class II subfamily. Mg(2+) is required as a cofactor. Expressed by the venom gland.

The protein resides in the secreted. The catalysed reaction is an N-(acyl)-sphingosylphosphocholine = an N-(acyl)-sphingosyl-1,3-cyclic phosphate + choline. It carries out the reaction an N-(acyl)-sphingosylphosphoethanolamine = an N-(acyl)-sphingosyl-1,3-cyclic phosphate + ethanolamine. The enzyme catalyses a 1-acyl-sn-glycero-3-phosphocholine = a 1-acyl-sn-glycero-2,3-cyclic phosphate + choline. It catalyses the reaction a 1-acyl-sn-glycero-3-phosphoethanolamine = a 1-acyl-sn-glycero-2,3-cyclic phosphate + ethanolamine. Dermonecrotic toxins cleave the phosphodiester linkage between the phosphate and headgroup of certain phospholipids (sphingolipid and lysolipid substrates), forming an alcohol (often choline) and a cyclic phosphate. This toxin acts on sphingomyelin (SM). It may also act on ceramide phosphoethanolamine (CPE), lysophosphatidylcholine (LPC) and lysophosphatidylethanolamine (LPE), but not on lysophosphatidylserine (LPS), and lysophosphatidylglycerol (LPG). It acts by transphosphatidylation, releasing exclusively cyclic phosphate products as second products. Induces dermonecrosis, hemolysis, increased vascular permeability, edema, inflammatory response, and platelet aggregation. The polypeptide is Dermonecrotic toxin LarSicTox-alphaIII1 (Loxosceles arizonica (Arizona brown spider)).